The chain runs to 181 residues: Disulfide bond formation protein B (181 aa).

Over 1-13 the chain is Cytoplasmic; that stretch reads MLSVGQWPNKPFA. A helical transmembrane segment spans residues 14–30; that stretch reads WLLLFLGCSGLLGAALY. Over 31 to 48 the chain is Periplasmic; that stretch reads FQMVLNLEPCVKCVYQRM. Cysteines 40 and 43 form a disulfide. Residues 49–64 traverse the membrane as a helical segment; that stretch reads AVIGIGLSAIVGLFGS. Residues 65-71 are Cytoplasmic-facing; the sequence is GLWLTRW. A helical membrane pass occupies residues 72 to 89; it reads AALIGWLYSSYQGLLIAY. Residues 90–145 are Periplasmic-facing; that stretch reads DHWDLQTSKNAFFAVCESAPNFPDWAPMHEWMPGLFAAPGLCGDIDWQWLGLGMPG. Cys105 and Cys131 are joined by a disulfide. A helical transmembrane segment spans residues 146-164; sequence WMTVIFAGLLLIGIIVTIC. Residues 165-181 are Cytoplasmic-facing; it reads HIISSFTKKDGLVLYHK.

This sequence belongs to the DsbB family.

The protein resides in the cell inner membrane. Functionally, required for disulfide bond formation in some periplasmic proteins. Acts by oxidizing the DsbA protein. This is Disulfide bond formation protein B from Idiomarina loihiensis (strain ATCC BAA-735 / DSM 15497 / L2-TR).